A 520-amino-acid chain; its full sequence is Ribonuclease Y (520 aa).

Residues 4-24 (TVWILISILLATVGAVVGFFV) form a helical membrane-spanning segment. The interval 86–116 (KQENRLMQKEENLDRKDETLDKREQQLEKKE) is disordered. In terms of domain architecture, KH spans 210-273 (TVSVVNLPND…ETARIALDKL (64 aa)). The 94-residue stretch at 336–429 (VLKHSMEVAY…VAAADALSAA (94 aa)) folds into the HD domain.

The protein belongs to the RNase Y family.

The protein localises to the cell membrane. Its function is as follows. Endoribonuclease that initiates mRNA decay. In Bacillus cereus (strain ATCC 10987 / NRS 248), this protein is Ribonuclease Y.